Here is a 66-residue protein sequence, read N- to C-terminus: Photosystem II reaction center protein J (66 aa).

The disordered stretch occupies residues 1–23; it reads MSGNKSPFPDGRIPDRLPDGRPA. Residues 37 to 57 traverse the membrane as a helical segment; sequence LWLVATAGGMAVLFVVGLFFY.

This sequence belongs to the PsbJ family. As to quaternary structure, PSII is composed of 1 copy each of membrane proteins PsbA, PsbB, PsbC, PsbD, PsbE, PsbF, PsbH, PsbI, PsbJ, PsbK, PsbL, PsbM, PsbT, PsbX, PsbY, PsbZ, Psb30/Ycf12, peripheral proteins PsbO, CyanoQ (PsbQ), PsbU, PsbV and a large number of cofactors. It forms dimeric complexes.

Its subcellular location is the cellular thylakoid membrane. One of the components of the core complex of photosystem II (PSII). PSII is a light-driven water:plastoquinone oxidoreductase that uses light energy to abstract electrons from H(2)O, generating O(2) and a proton gradient subsequently used for ATP formation. It consists of a core antenna complex that captures photons, and an electron transfer chain that converts photonic excitation into a charge separation. The chain is Photosystem II reaction center protein J from Parasynechococcus marenigrum (strain WH8102).